Consider the following 198-residue polypeptide: Probable GTP-binding protein EngB (198 aa).

Positions asparagine 21–glycine 195 constitute an EngB-type G domain. GTP is bound by residues glycine 29 to serine 36, glycine 56 to leucine 60, aspartate 81 to glycine 84, threonine 151 to aspartate 154, and valine 174 to asparagine 176. Residues serine 36 and threonine 58 each coordinate Mg(2+).

Belongs to the TRAFAC class TrmE-Era-EngA-EngB-Septin-like GTPase superfamily. EngB GTPase family. Mg(2+) serves as cofactor.

Its function is as follows. Necessary for normal cell division and for the maintenance of normal septation. In Campylobacter jejuni subsp. jejuni serotype O:6 (strain 81116 / NCTC 11828), this protein is Probable GTP-binding protein EngB.